A 777-amino-acid chain; its full sequence is DnaJ homolog subfamily C member 16 (777 aa).

Positions 1 to 23 (MELGRAGPAGLLLLLLLLLAAQA) are cleaved as a signal peptide. Topologically, residues 24–531 (APERDPYRVL…DSLFHSNWRE (508 aa)) are cytoplasmic. The J domain occupies 28-92 (DPYRVLGVGR…EKRANFDRYG (65 aa)). One can recognise a Thioredoxin domain in the interval 117–243 (FDESFFHFPF…LRQFVENLLP (127 aa)). The chain crosses the membrane as a helical; Anchor for type IV membrane protein span at residues 532–552 (MMPLLSLLFSALFILFGTVIV). Topologically, residues 553 to 777 (QAFSDSSDTR…FYIPSWPALD (225 aa)) are extracellular. A disordered region spans residues 558-589 (SSDTRDSPASEKKDTTAKTEKNDTSFNKESNS). The segment covering 559–580 (SDTRDSPASEKKDTTAKTEKND) has biased composition (basic and acidic residues). Residue Asn-627 is glycosylated (N-linked (GlcNAc...) asparagine).

It is found in the endoplasmic reticulum membrane. Functionally, plays an important role in regulating the size of autophagosomes during the formation process. The sequence is that of DnaJ homolog subfamily C member 16 (DNAJC16) from Gallus gallus (Chicken).